We begin with the raw amino-acid sequence, 422 residues long: ORC1-type DNA replication protein 13 (422 aa).

ATP contacts are provided by residues Thr-80–Leu-84, Tyr-231, and Arg-243.

It belongs to the CDC6/cdc18 family.

Its function is as follows. Involved in regulation of DNA replication. This Haloarcula marismortui (strain ATCC 43049 / DSM 3752 / JCM 8966 / VKM B-1809) (Halobacterium marismortui) protein is ORC1-type DNA replication protein 13 (cdc6m).